We begin with the raw amino-acid sequence, 800 residues long: Phenylalanine--tRNA ligase beta subunit (800 aa).

Residues 39-154 (SKDIKNLVVG…TEVEPGTDAL (116 aa)) form the tRNA-binding domain. Positions 408–483 (SFVTPIDITA…RIYGYDEIPS (76 aa)) constitute a B5 domain. Positions 461, 467, 470, and 471 each coordinate Mg(2+). The region spanning 708–800 (PKFPGVTRDI…ALQAQGATIR (93 aa)) is the FDX-ACB domain.

This sequence belongs to the phenylalanyl-tRNA synthetase beta subunit family. Type 1 subfamily. As to quaternary structure, tetramer of two alpha and two beta subunits. Requires Mg(2+) as cofactor.

Its subcellular location is the cytoplasm. It carries out the reaction tRNA(Phe) + L-phenylalanine + ATP = L-phenylalanyl-tRNA(Phe) + AMP + diphosphate + H(+). In Staphylococcus haemolyticus (strain JCSC1435), this protein is Phenylalanine--tRNA ligase beta subunit.